The chain runs to 677 residues: DNA ligase (677 aa).

NAD(+) contacts are provided by residues 34 to 38, 84 to 85, and glutamate 118; these read DAQYD and SL. Lysine 120 (N6-AMP-lysine intermediate) is an active-site residue. 4 residues coordinate NAD(+): arginine 141, glutamate 176, lysine 283, and lysine 307. Residues cysteine 403, cysteine 406, cysteine 421, and cysteine 427 each coordinate Zn(2+). Residues 594–677 form the BRCT domain; the sequence is ETASPISGKT…DLLKTVSNSE (84 aa).

The protein belongs to the NAD-dependent DNA ligase family. LigA subfamily. The cofactor is Mg(2+). Requires Mn(2+) as cofactor.

The catalysed reaction is NAD(+) + (deoxyribonucleotide)n-3'-hydroxyl + 5'-phospho-(deoxyribonucleotide)m = (deoxyribonucleotide)n+m + AMP + beta-nicotinamide D-nucleotide.. In terms of biological role, DNA ligase that catalyzes the formation of phosphodiester linkages between 5'-phosphoryl and 3'-hydroxyl groups in double-stranded DNA using NAD as a coenzyme and as the energy source for the reaction. It is essential for DNA replication and repair of damaged DNA. This Anaplasma phagocytophilum (strain HZ) protein is DNA ligase.